Reading from the N-terminus, the 197-residue chain is Imidazoleglycerol-phosphate dehydratase (197 aa).

Belongs to the imidazoleglycerol-phosphate dehydratase family.

Its subcellular location is the cytoplasm. The catalysed reaction is D-erythro-1-(imidazol-4-yl)glycerol 3-phosphate = 3-(imidazol-4-yl)-2-oxopropyl phosphate + H2O. It participates in amino-acid biosynthesis; L-histidine biosynthesis; L-histidine from 5-phospho-alpha-D-ribose 1-diphosphate: step 6/9. The protein is Imidazoleglycerol-phosphate dehydratase of Hahella chejuensis (strain KCTC 2396).